Reading from the N-terminus, the 87-residue chain is Small ribosomal subunit protein bS20 (87 aa).

The segment at 1–20 (MANIKSQIKRNKTNEKARLR) is disordered.

The protein belongs to the bacterial ribosomal protein bS20 family.

In terms of biological role, binds directly to 16S ribosomal RNA. This chain is Small ribosomal subunit protein bS20, found in Corynebacterium efficiens (strain DSM 44549 / YS-314 / AJ 12310 / JCM 11189 / NBRC 100395).